A 351-amino-acid polypeptide reads, in one-letter code: Dihydroorotate dehydrogenase (quinone) (351 aa).

FMN-binding positions include 61–65 (AGLDK) and Thr85. Lys65 serves as a coordination point for substrate. Substrate is bound at residue 110–114 (NRMGF). The FMN site is built by Asn139 and Asn172. Asn172 serves as a coordination point for substrate. Ser175 acts as the Nucleophile in catalysis. Asn177 contributes to the substrate binding site. FMN contacts are provided by Lys217 and Thr245. 246–247 (NT) is a substrate binding site. Residues Gly268, Gly297, and 318 to 319 (YS) each bind FMN.

This sequence belongs to the dihydroorotate dehydrogenase family. Type 2 subfamily. Monomer. Requires FMN as cofactor.

It localises to the cell membrane. The enzyme catalyses (S)-dihydroorotate + a quinone = orotate + a quinol. It functions in the pathway pyrimidine metabolism; UMP biosynthesis via de novo pathway; orotate from (S)-dihydroorotate (quinone route): step 1/1. Its function is as follows. Catalyzes the conversion of dihydroorotate to orotate with quinone as electron acceptor. This Xanthomonas oryzae pv. oryzae (strain PXO99A) protein is Dihydroorotate dehydrogenase (quinone).